We begin with the raw amino-acid sequence, 432 residues long: MFHLKEQQTSIKQEIIAGLTTFFTMVYIVVVNPVILANAGVPFDQVFTATIIASIVGTLWMALAANYPIAIAPGMGLNAYLAFHVVSASDGGITYATAFSAVFTAGVLFIILSLTPLRKQLIEAIPNNLKYGITTGIGLFIAFIGLRQAGIVAADESNLVTLGNLHSPGVILTLVGLLISVVLMVLNVSGALFIGMAATALIAFFTGQLHFSKGFMSLPHLPEGLMISNPFTAFGDVIHHGLYAVVFSFLLVTIFDTTGTMIGVAEQAGLMKNNKLPNVRKALLADSTATTVGAVFGTSPTTAFIESSAGVAAGGRTGLTALTVAVMFAASMFFSPLVSALSGIAAITSPALIIVGSLMMGSVSNMNWKEMDEAFPAFLVILAMPLTSSISTGIALGFISYPIVKAARGKWREIHPLVIVFAILFFIQLFIL.

The next 10 helical transmembrane spans lie at 15–35, 51–71, 92–112, 133–153, 174–194, 196–216, 234–254, 340–360, 379–399, and 412–432; these read IIAGLTTFFTMVYIVVVNPVI, IIASIVGTLWMALAANYPIAI, GITYATAFSAVFTAGVLFIIL, ITTGIGLFIAFIGLRQAGIVA, LVGLLISVVLMVLNVSGALFI, MAATALIAFFTGQLHFSKGFM, FGDVIHHGLYAVVFSFLLVTI, ALSGIAAITSPALIIVGSLMM, LVILAMPLTSSISTGIALGFI, and REIHPLVIVFAILFFIQLFIL.

Belongs to the nucleobase:cation symporter-2 (NCS2) (TC 2.A.40) family. Azg-like subfamily.

The protein resides in the cell membrane. Involved in the uptake of the purine bases hypoxanthine and guanine. May work at purine concentrations higher than 100 uM. The sequence is that of Guanine/hypoxanthine permease PbuO (pbuO) from Bacillus subtilis (strain 168).